A 609-amino-acid chain; its full sequence is Elongation factor 4 (609 aa).

In terms of domain architecture, tr-type G spans 11–193 (ERIRNFSIIA…QIVEKIPAPS (183 aa)). Residues 23–28 (DHGKST) and 140–143 (NKID) each bind GTP.

This sequence belongs to the TRAFAC class translation factor GTPase superfamily. Classic translation factor GTPase family. LepA subfamily.

Its subcellular location is the cell membrane. It catalyses the reaction GTP + H2O = GDP + phosphate + H(+). Required for accurate and efficient protein synthesis under certain stress conditions. May act as a fidelity factor of the translation reaction, by catalyzing a one-codon backward translocation of tRNAs on improperly translocated ribosomes. Back-translocation proceeds from a post-translocation (POST) complex to a pre-translocation (PRE) complex, thus giving elongation factor G a second chance to translocate the tRNAs correctly. Binds to ribosomes in a GTP-dependent manner. The polypeptide is Elongation factor 4 (Geobacillus thermodenitrificans (strain NG80-2)).